The primary structure comprises 284 residues: 2,3,4,5-tetrahydropyridine-2,6-dicarboxylate N-succinyltransferase (284 aa).

Belongs to the transferase hexapeptide repeat family.

The protein localises to the cytoplasm. The catalysed reaction is (S)-2,3,4,5-tetrahydrodipicolinate + succinyl-CoA + H2O = (S)-2-succinylamino-6-oxoheptanedioate + CoA. Its pathway is amino-acid biosynthesis; L-lysine biosynthesis via DAP pathway; LL-2,6-diaminopimelate from (S)-tetrahydrodipicolinate (succinylase route): step 1/3. The chain is 2,3,4,5-tetrahydropyridine-2,6-dicarboxylate N-succinyltransferase from Brucella abortus (strain S19).